The following is a 224-amino-acid chain: uncharacterized protein (224 aa).

The span at 44–139 (TSPPIVPLPT…PSPPPSPSPL (96 aa)) shows a compositional bias: pro residues. Positions 44-145 (TSPPIVPLPT…PSPLGEPMYY (102 aa)) are disordered.

This is an uncharacterized protein from Lepidoptera (butterflies and moths).